The chain runs to 425 residues: Serine--tRNA ligase (425 aa).

Residue 231–233 (TAE) coordinates L-serine. 262-264 (RSE) is a binding site for ATP. Glu-285 provides a ligand contact to L-serine. 349–352 (EISS) contacts ATP. Ser-385 is a binding site for L-serine.

Belongs to the class-II aminoacyl-tRNA synthetase family. Type-1 seryl-tRNA synthetase subfamily. In terms of assembly, homodimer. The tRNA molecule binds across the dimer.

The protein localises to the cytoplasm. The catalysed reaction is tRNA(Ser) + L-serine + ATP = L-seryl-tRNA(Ser) + AMP + diphosphate + H(+). It carries out the reaction tRNA(Sec) + L-serine + ATP = L-seryl-tRNA(Sec) + AMP + diphosphate + H(+). It participates in aminoacyl-tRNA biosynthesis; selenocysteinyl-tRNA(Sec) biosynthesis; L-seryl-tRNA(Sec) from L-serine and tRNA(Sec): step 1/1. Catalyzes the attachment of serine to tRNA(Ser). Is also able to aminoacylate tRNA(Sec) with serine, to form the misacylated tRNA L-seryl-tRNA(Sec), which will be further converted into selenocysteinyl-tRNA(Sec). This chain is Serine--tRNA ligase, found in Alkaliphilus oremlandii (strain OhILAs) (Clostridium oremlandii (strain OhILAs)).